The sequence spans 556 residues: Innexin-7 (556 aa).

3 helical membrane passes run 21–41 (LVASIHSFLTSNLLVGLAVLI), 127–147 (FFLLFEAACFRLPCFIWKYFA), and 213–233 (AYYVTFIYFVAKVAFLLNVIL). Asn-267 is a glycosylation site (N-linked (GlcNAc...) asparagine). The helical transmembrane segment at 310 to 330 (IFVFLWAWYILLTAFTVGNLF) threads the bilayer. Positions 431-556 (DESQVESGKN…IPKTAEKKHW (126 aa)) are disordered. Residues 435–447 (VESGKNTAPSTSH) are compositionally biased toward polar residues. Over residues 452–461 (RGTEQLEKNV) the composition is skewed to basic and acidic residues. Over residues 463–474 (SRQGSLSTQLRP) the composition is skewed to polar residues. The segment covering 500-513 (KGSKKPSPTKKKAS) has biased composition (basic residues). The segment covering 514 to 527 (SKNSPQSSSNSRRP) has biased composition (low complexity). The span at 539-556 (HHHEPDSKIPKTAEKKHW) shows a compositional bias: basic and acidic residues.

Belongs to the pannexin family.

The protein resides in the cell membrane. It localises to the cell junction. Its subcellular location is the gap junction. Functionally, structural component of the gap junctions. This Caenorhabditis elegans protein is Innexin-7 (inx-7).